A 520-amino-acid polypeptide reads, in one-letter code: Ribonuclease Y (520 aa).

A helical membrane pass occupies residues 4–24 (TVWILISILLATVGAVVGFFV). Positions 86 to 116 (KQENRLMQKEENLDRKDETLDKREQQLEKKE) are disordered. Residues 210 to 273 (TVSVVNLPND…ETARIALDKL (64 aa)) form the KH domain. The HD domain maps to 336-429 (VLKHSMEVAY…VAAADALSAA (94 aa)).

It belongs to the RNase Y family.

It is found in the cell membrane. Functionally, endoribonuclease that initiates mRNA decay. In Bacillus cereus (strain ATCC 10987 / NRS 248), this protein is Ribonuclease Y.